Here is a 229-residue protein sequence, read N- to C-terminus: Ribonuclease 3 (229 aa).

Residues 5 to 127 (LDRLERKLGY…LIGAIYLDTG (123 aa)) enclose the RNase III domain. Mg(2+) is bound at residue glutamate 40. Aspartate 44 is an active-site residue. Residues aspartate 113 and glutamate 116 each coordinate Mg(2+). Glutamate 116 is an active-site residue. In terms of domain architecture, DRBM spans 154–224 (DPKTRLQEFL…AAAALVALGV (71 aa)).

It belongs to the ribonuclease III family. As to quaternary structure, homodimer. Mg(2+) serves as cofactor.

The protein localises to the cytoplasm. The catalysed reaction is Endonucleolytic cleavage to 5'-phosphomonoester.. In terms of biological role, digests double-stranded RNA. Involved in the processing of primary rRNA transcript to yield the immediate precursors to the large and small rRNAs (23S and 16S). Processes some mRNAs, and tRNAs when they are encoded in the rRNA operon. Processes pre-crRNA and tracrRNA of type II CRISPR loci if present in the organism. The polypeptide is Ribonuclease 3 (Pseudomonas paraeruginosa (strain DSM 24068 / PA7) (Pseudomonas aeruginosa (strain PA7))).